The sequence spans 327 residues: Aldo-keto reductase family 1 member A1 (327 aa).

NADP(+) contacts are provided by residues Gly13–Gly22, Thr23, Trp24, and Asp47. Tyr52 serves as the catalytic Proton donor. Residues Ser164, Asn165, Ser213, Leu215, Ser217, Lys265, Ser266, Val267, Thr268, Arg271, Gln274, and Asn275 each contribute to the NADP(+) site.

Belongs to the aldo/keto reductase family.

It is found in the cytoplasm. The protein localises to the cytosol. It localises to the apical cell membrane. The catalysed reaction is a primary alcohol + NADP(+) = an aldehyde + NADPH + H(+). The enzyme catalyses S-nitroso-CoA + NADPH + H(+) = sulfinamide-CoA + NADP(+). It catalyses the reaction S-nitrosoglutathione + NADPH + H(+) = S-(hydroxysulfenamide)glutathione + NADP(+). In terms of biological role, catalyzes the NADPH-dependent reduction of a wide variety of carbonyl-containing compounds to their corresponding alcohols. Displays enzymatic activity towards endogenous metabolites such as aromatic and aliphatic aldehydes, ketones, monosaccharides and bile acids. Acts as an aldehyde-detoxification enzyme. Also acts as an inhibitor of protein S-nitrosylation by mediating degradation of S-nitroso-coenzyme A (S-nitroso-CoA), a cofactor required to S-nitrosylate proteins. Also acts as a S-nitroso-glutathione reductase by catalyzing the NADPH-dependent reduction of S-nitrosoglutathione. Displays no reductase activity towards retinoids. This chain is Aldo-keto reductase family 1 member A1 (AKR1A1), found in Gallus gallus (Chicken).